A 579-amino-acid polypeptide reads, in one-letter code: MFS-type transporter ppz2 (579 aa).

The interval 1 to 23 is disordered; that stretch reads MQTATALEDSANAPSPAASSQGQ. Low complexity predominate over residues 10–20; sequence SANAPSPAASS. Asn38 is a glycosylation site (N-linked (GlcNAc...) asparagine). The next 14 helical transmembrane spans lie at 48-68, 83-103, 121-141, 145-165, 171-191, 203-223, 236-256, 269-289, 298-318, 336-356, 374-394, 403-423, 438-460, and 516-536; these read ALIM…NTII, AAYT…TMVW, LCFF…MLIA, IQGI…GDLF, GLYY…GPVV, WCFY…ILLL, IAAI…MILL, SATV…CFSW, LLPV…ACFI, AVLG…AVSI, LTPI…FIDL, IIVF…APMV, TSAY…QTVF, and SMWI…PFLG.

Belongs to the major facilitator superfamily. TCR/Tet family.

The protein resides in the membrane. MFS-type transporter; part of the gene cluster that mediates the biosynthesis of pyrrolopyrazines, secondary metabolites showing insecticidal activity. Probably involved in the secretion of peramine and other pyrrolopyrazines. This Metarhizium majus (strain ARSEF 297) protein is MFS-type transporter ppz2.